The following is a 318-amino-acid chain: Ribonuclease Z (318 aa).

Residues His62, His64, Asp66, His67, His144, Asp215, and His273 each contribute to the Zn(2+) site. Asp66 functions as the Proton acceptor in the catalytic mechanism.

It belongs to the RNase Z family. As to quaternary structure, homodimer. Requires Zn(2+) as cofactor.

It catalyses the reaction Endonucleolytic cleavage of RNA, removing extra 3' nucleotides from tRNA precursor, generating 3' termini of tRNAs. A 3'-hydroxy group is left at the tRNA terminus and a 5'-phosphoryl group is left at the trailer molecule.. In terms of biological role, zinc phosphodiesterase, which displays some tRNA 3'-processing endonuclease activity. Probably involved in tRNA maturation, by removing a 3'-trailer from precursor tRNA. In Prochlorococcus marinus (strain MIT 9313), this protein is Ribonuclease Z.